Consider the following 114-residue polypeptide: Ig heavy chain V region GOM (114 aa).

One can recognise an Ig-like domain in the interval 1 to 112 (EVQLVESGGD…YWGQGTLVTV (112 aa)).

This chain is Ig heavy chain V region GOM, found in Canis lupus familiaris (Dog).